The following is a 121-amino-acid chain: Ribosome-binding factor A (121 aa).

This sequence belongs to the RbfA family. Monomer. Binds 30S ribosomal subunits, but not 50S ribosomal subunits or 70S ribosomes.

The protein resides in the cytoplasm. One of several proteins that assist in the late maturation steps of the functional core of the 30S ribosomal subunit. Associates with free 30S ribosomal subunits (but not with 30S subunits that are part of 70S ribosomes or polysomes). Required for efficient processing of 16S rRNA. May interact with the 5'-terminal helix region of 16S rRNA. This is Ribosome-binding factor A from Finegoldia magna (strain ATCC 29328 / DSM 20472 / WAL 2508) (Peptostreptococcus magnus).